Reading from the N-terminus, the 160-residue chain is NADH-quinone oxidoreductase subunit B (160 aa).

Residues C39, C40, C104, and C135 each coordinate [4Fe-4S] cluster.

Belongs to the complex I 20 kDa subunit family. In terms of assembly, NDH-1 is composed of 14 different subunits. Subunits NuoB, C, D, E, F, and G constitute the peripheral sector of the complex. Requires [4Fe-4S] cluster as cofactor.

The protein localises to the cell membrane. It catalyses the reaction a quinone + NADH + 5 H(+)(in) = a quinol + NAD(+) + 4 H(+)(out). In terms of biological role, NDH-1 shuttles electrons from NADH, via FMN and iron-sulfur (Fe-S) centers, to quinones in the respiratory chain. The immediate electron acceptor for the enzyme in this species is believed to be a menaquinone. Couples the redox reaction to proton translocation (for every two electrons transferred, four hydrogen ions are translocated across the cytoplasmic membrane), and thus conserves the redox energy in a proton gradient. The polypeptide is NADH-quinone oxidoreductase subunit B (Amoebophilus asiaticus (strain 5a2)).